The following is a 301-amino-acid chain: 4-hydroxy-tetrahydrodipicolinate synthase (301 aa).

Position 57 (Thr57) interacts with pyruvate. The active-site Proton donor/acceptor is the Tyr143. Residue Lys171 is the Schiff-base intermediate with substrate of the active site. Ile211 contacts pyruvate.

This sequence belongs to the DapA family. Homotetramer; dimer of dimers.

It is found in the cytoplasm. It catalyses the reaction L-aspartate 4-semialdehyde + pyruvate = (2S,4S)-4-hydroxy-2,3,4,5-tetrahydrodipicolinate + H2O + H(+). The protein operates within amino-acid biosynthesis; L-lysine biosynthesis via DAP pathway; (S)-tetrahydrodipicolinate from L-aspartate: step 3/4. Catalyzes the condensation of (S)-aspartate-beta-semialdehyde [(S)-ASA] and pyruvate to 4-hydroxy-tetrahydrodipicolinate (HTPA). The polypeptide is 4-hydroxy-tetrahydrodipicolinate synthase (Bifidobacterium longum (strain DJO10A)).